Here is a 354-residue protein sequence, read N- to C-terminus: Methionine import ATP-binding protein MetN (354 aa).

One can recognise an ABC transporter domain in the interval 8 to 250 (LDHIDITFHQ…PREDLTKDFI (243 aa)). 42 to 49 (GYSGAGKS) provides a ligand contact to ATP.

This sequence belongs to the ABC transporter superfamily. Methionine importer (TC 3.A.1.24) family. The complex is composed of two ATP-binding proteins (MetN), two transmembrane proteins (MetI) and a solute-binding protein (MetQ).

Its subcellular location is the cell membrane. The catalysed reaction is L-methionine(out) + ATP + H2O = L-methionine(in) + ADP + phosphate + H(+). The enzyme catalyses D-methionine(out) + ATP + H2O = D-methionine(in) + ADP + phosphate + H(+). Functionally, part of the ABC transporter complex MetNIQ involved in methionine import. Responsible for energy coupling to the transport system. The sequence is that of Methionine import ATP-binding protein MetN from Streptococcus mutans serotype c (strain ATCC 700610 / UA159).